The sequence spans 410 residues: MRIVLAYSGGLDTSVILKLMQEKLGAEVITVTVDVGQKDDFEKIEEKAYKFGAVKHYYIDAKEEFAENYVCKAIKANALYENAYPLSTALARPLIVEKLVEVAKKEGAGIIAHGCTGKGNDQVRFNLGIKALMPEAEILQPVAEWNLTRDWEMEYAKKHGIPVSDKIYSIDENIWGRSIEGGVLEDPSIEPPEEVFEWTVSIEKAPDKPEYVTIGFENGVPVSLNGEKMKLLELILKLNEIAGKHGVGRIDHIEDRSVGIKSREVYEAPAAVTLIKAHQDLEKLTLTKWVIEFKSIVDSKWSWLVYNGLWYEPLRLALEGFIDEAEKAVNGEVTVKLWKGNAIVVGRKSDNALYDVKMATYEKFSTFDQKLAKGFIELFGMQSVLAYNMLHGVHSTSNISEIKEAIKTLE.

ATP is bound at residue 6–14; sequence AYSGGLDTS. Tyr84 lines the L-citrulline pocket. An ATP-binding site is contributed by Gly114. Thr116, Asn120, and Asp121 together coordinate L-aspartate. Asn120 is an L-citrulline binding site. L-citrulline is bound by residues Arg124, Ser169, Ser178, Glu254, and Tyr266.

It belongs to the argininosuccinate synthase family. Type 1 subfamily. As to quaternary structure, homotetramer.

It localises to the cytoplasm. The catalysed reaction is L-citrulline + L-aspartate + ATP = 2-(N(omega)-L-arginino)succinate + AMP + diphosphate + H(+). It participates in amino-acid biosynthesis; L-arginine biosynthesis; L-arginine from L-ornithine and carbamoyl phosphate: step 2/3. The protein is Argininosuccinate synthase of Pyrococcus furiosus (strain ATCC 43587 / DSM 3638 / JCM 8422 / Vc1).